The chain runs to 546 residues: Chaperonin GroEL (546 aa).

ATP contacts are provided by residues 30–33 (TLGP), K51, 87–91 (DGTTT), G415, and D495.

It belongs to the chaperonin (HSP60) family. In terms of assembly, forms a cylinder of 14 subunits composed of two heptameric rings stacked back-to-back. Interacts with the co-chaperonin GroES.

Its subcellular location is the cytoplasm. The catalysed reaction is ATP + H2O + a folded polypeptide = ADP + phosphate + an unfolded polypeptide.. In terms of biological role, together with its co-chaperonin GroES, plays an essential role in assisting protein folding. The GroEL-GroES system forms a nano-cage that allows encapsulation of the non-native substrate proteins and provides a physical environment optimized to promote and accelerate protein folding. This is Chaperonin GroEL from Brucella anthropi (strain ATCC 49188 / DSM 6882 / CCUG 24695 / JCM 21032 / LMG 3331 / NBRC 15819 / NCTC 12168 / Alc 37) (Ochrobactrum anthropi).